The chain runs to 338 residues: Ketol-acid reductoisomerase (NADP(+)) (338 aa).

The 181-residue stretch at 3 to 183 (IELLYDADAD…GGARAGVIPT (181 aa)) folds into the KARI N-terminal Rossmann domain. Residues 26–29 (YGSQ), R49, S52, S54, and 84–87 (DTSQ) contribute to the NADP(+) site. Residue H109 is part of the active site. Position 135 (G135) interacts with NADP(+). Residues 184 to 329 (TFEAETVTDL…AKLRDLMSWV (146 aa)) form the KARI C-terminal knotted domain. The Mg(2+) site is built by D192, E196, E228, and E232. S253 contacts substrate.

Belongs to the ketol-acid reductoisomerase family. Mg(2+) serves as cofactor.

The catalysed reaction is (2R)-2,3-dihydroxy-3-methylbutanoate + NADP(+) = (2S)-2-acetolactate + NADPH + H(+). It catalyses the reaction (2R,3R)-2,3-dihydroxy-3-methylpentanoate + NADP(+) = (S)-2-ethyl-2-hydroxy-3-oxobutanoate + NADPH + H(+). The protein operates within amino-acid biosynthesis; L-isoleucine biosynthesis; L-isoleucine from 2-oxobutanoate: step 2/4. It functions in the pathway amino-acid biosynthesis; L-valine biosynthesis; L-valine from pyruvate: step 2/4. Functionally, involved in the biosynthesis of branched-chain amino acids (BCAA). Catalyzes an alkyl-migration followed by a ketol-acid reduction of (S)-2-acetolactate (S2AL) to yield (R)-2,3-dihydroxy-isovalerate. In the isomerase reaction, S2AL is rearranged via a Mg-dependent methyl migration to produce 3-hydroxy-3-methyl-2-ketobutyrate (HMKB). In the reductase reaction, this 2-ketoacid undergoes a metal-dependent reduction by NADPH to yield (R)-2,3-dihydroxy-isovalerate. This Corynebacterium glutamicum (strain ATCC 13032 / DSM 20300 / JCM 1318 / BCRC 11384 / CCUG 27702 / LMG 3730 / NBRC 12168 / NCIMB 10025 / NRRL B-2784 / 534) protein is Ketol-acid reductoisomerase (NADP(+)).